Consider the following 440-residue polypeptide: Serine hydroxymethyltransferase (440 aa).

(6S)-5,6,7,8-tetrahydrofolate contacts are provided by residues Leu119 and 123 to 125 (GHL). Lys228 carries the post-translational modification N6-(pyridoxal phosphate)lysine. A (6S)-5,6,7,8-tetrahydrofolate-binding site is contributed by 370-372 (SPF).

It belongs to the SHMT family. As to quaternary structure, homodimer. Requires pyridoxal 5'-phosphate as cofactor.

Its subcellular location is the cytoplasm. The enzyme catalyses (6R)-5,10-methylene-5,6,7,8-tetrahydrofolate + glycine + H2O = (6S)-5,6,7,8-tetrahydrofolate + L-serine. It functions in the pathway one-carbon metabolism; tetrahydrofolate interconversion. It participates in amino-acid biosynthesis; glycine biosynthesis; glycine from L-serine: step 1/1. Catalyzes the reversible interconversion of serine and glycine with tetrahydrofolate (THF) serving as the one-carbon carrier. This reaction serves as the major source of one-carbon groups required for the biosynthesis of purines, thymidylate, methionine, and other important biomolecules. Also exhibits THF-independent aldolase activity toward beta-hydroxyamino acids, producing glycine and aldehydes, via a retro-aldol mechanism. The polypeptide is Serine hydroxymethyltransferase (Chloroherpeton thalassium (strain ATCC 35110 / GB-78)).